The chain runs to 386 residues: Alcohol dehydrogenase-like 2 (386 aa).

Zn(2+)-binding residues include Cys-51, Thr-53, His-74, Cys-104, Cys-107, Cys-110, Cys-118, and Cys-183. The an alcohol site is built by Thr-53 and His-74. Thr-53 lines the NAD(+) pocket. NAD(+) contacts are provided by residues 208–213 (GLGAVG), Asp-232, Lys-237, 302–304 (LGM), Phe-329, and Arg-379.

This sequence belongs to the zinc-containing alcohol dehydrogenase family. Class-III subfamily. Homodimer. Zn(2+) serves as cofactor.

Its subcellular location is the cytoplasm. It catalyses the reaction a primary alcohol + NAD(+) = an aldehyde + NADH + H(+). The enzyme catalyses a secondary alcohol + NAD(+) = a ketone + NADH + H(+). The chain is Alcohol dehydrogenase-like 2 from Arabidopsis thaliana (Mouse-ear cress).